The chain runs to 341 residues: Dihydroorotate dehydrogenase (quinone) (341 aa).

Residues 62 to 66 (AGMDK) and Thr86 contribute to the FMN site. Residue Lys66 participates in substrate binding. 111-115 (NRMGF) serves as a coordination point for substrate. Residues Asn139 and Asn172 each contribute to the FMN site. Asn172 contacts substrate. The Nucleophile role is filled by Ser175. Asn177 is a binding site for substrate. Residues Lys217 and Thr245 each contribute to the FMN site. 246 to 247 (NT) contacts substrate. FMN contacts are provided by residues Gly268, Gly297, and 318 to 319 (YS).

Belongs to the dihydroorotate dehydrogenase family. Type 2 subfamily. In terms of assembly, monomer. FMN is required as a cofactor.

Its subcellular location is the cell membrane. The enzyme catalyses (S)-dihydroorotate + a quinone = orotate + a quinol. The protein operates within pyrimidine metabolism; UMP biosynthesis via de novo pathway; orotate from (S)-dihydroorotate (quinone route): step 1/1. Functionally, catalyzes the conversion of dihydroorotate to orotate with quinone as electron acceptor. In Shewanella loihica (strain ATCC BAA-1088 / PV-4), this protein is Dihydroorotate dehydrogenase (quinone).